The primary structure comprises 158 residues: Chromobox protein homolog 7 (158 aa).

Positions 11 to 69 (FAVESIRKKRVRKGKVEYLVKWKGWPPKYSTWEPEEHILDPRLVMAYEEKEERDRASGY) constitute a Chromo domain. The segment at 60–127 (KEERDRASGY…WTPTLPSSEV (68 aa)) is disordered. Residues 68 to 78 (GYRKRGPKPRR) are compositionally biased toward basic residues.

As to quaternary structure, component of a PRC1-like complex. Distinct PRC1-like core complexes are composed of a RING1 subunit (RING1B or RING1A), one of the six PCGF proteins (PCGF1-6), one PHC protein (PHC1-3) and one of the CBX proteins (CBX2, CBX4, CBX6, CBX7 or CBX8). The composition of the PRC1 complex may differ between the PRC1 complex in pluripotent embryonic stem cells containing RNF2, CBX7 and PCGF2, and the PRC1 complex in differentiating cells containing RNF2, CBX2, CBX4 and BMI1. Interacts with RING1. Interacts with RNF2, PHC1 and PCGF2. Interacts (via chromodomain) with histone H3K9Me3 and H3K27me3. Interacts with H3K9Me2 and H4K20Me1. Interacts (via chromodomain) with single-stranded and double-stranded RNA; RNA binding seems to be required for the localization to chromatin. Interacts with PCGF1, PCGF3, PCGF5 and PCGF6. As to expression, expressed in embryonic stem cells.

The protein resides in the nucleus. Its subcellular location is the chromosome. Component of a Polycomb group (PcG) multiprotein PRC1-like complex, a complex class required to maintain the transcriptionally repressive state of many genes, including Hox genes, throughout development. PcG PRC1 complex acts via chromatin remodeling and modification of histones; it mediates monoubiquitination of histone H2A 'Lys-119', rendering chromatin heritably changed in its expressibility. Promotes histone H3 trimethylation at 'Lys-9' (H3K9me3). Binds to histone H3 trimethylated at 'Lys-9' (H3K9me3) or at 'Lys-27' (H3K27me3). Trimethylation at 'Lys-27' (H3K27me3) is important for chromatin recruitment. May possibly also bind trimethylated lysine residues in other proteins (in vitro). Binds non-coding, single-stranded RNA and double-stranded RNA. Plays a role in the timely repression of differentiation-specific genes in pluripotent embryonic stem cells to maintain the undifferentiated state. Regulator of cellular lifespan by maintaining the repression of CDKN2A, but not by inducing telomerase activity. The sequence is that of Chromobox protein homolog 7 (Cbx7) from Mus musculus (Mouse).